We begin with the raw amino-acid sequence, 282 residues long: Glutamyl endopeptidase (282 aa).

The first 27 residues, 1–27 (MKKRFLSICTMTIAALATTTMVNTSYA), serve as a signal peptide directing secretion. A propeptide spanning residues 28–66 (KTDTESHNHSSLGTENKNVLDINSSSHNIKPSQNKSYPS) is cleaved from the precursor. Residues H117, D159, and S235 each act as charge relay system in the active site.

This sequence belongs to the peptidase S1B family. As to quaternary structure, monomer.

Its subcellular location is the secreted. The enzyme catalyses Preferential cleavage: Glu-|-Xaa, Asp-|-Xaa.. With respect to regulation, inhibited by diisopropyl fluorophosphate. Functionally, exhibits a significant hydrolytic activity for the carbonyl side of glutamic acid. Shows activity toward human fibronectin and type 1 collagen. This Staphylococcus epidermidis protein is Glutamyl endopeptidase (gseA).